The following is a 434-amino-acid chain: Galactofuranosyl glycosyltransferase (434 aa).

Residues 1 to 18 are Cytoplasmic-facing; the sequence is MAPPRWHHDRRRMAIFVR. The chain crosses the membrane as a helical; Signal-anchor for type II membrane protein span at residues 19-38; the sequence is VGLYTLLFLMGYVVPLIIFY. 4 N-linked (GlcNAc...) asparagine glycosylation sites follow: N39, N100, N162, and N388. The Lumenal portion of the chain corresponds to 39 to 434; that stretch reads NRSRADTFED…KLLDFPVDPS (396 aa).

It belongs to the glycosyltransferase 2 family.

It localises to the endoplasmic reticulum membrane. The protein operates within glycolipid biosynthesis; glycosylphosphatidylinositol-anchor biosynthesis. Glycosyltransferase that may be responsible for the addition of galactofuranosyl residues to the nascent lipophosphoglycan (LPG) chain. It could alternatively be involved in the synthesis of the galactofuranosyl donor. This Leishmania donovani protein is Galactofuranosyl glycosyltransferase (LPG1).